The primary structure comprises 104 residues: Large ribosomal subunit protein uL23 (104 aa).

It belongs to the universal ribosomal protein uL23 family. Part of the 50S ribosomal subunit. Contacts protein L29, and trigger factor when it is bound to the ribosome.

In terms of biological role, one of the early assembly proteins it binds 23S rRNA. One of the proteins that surrounds the polypeptide exit tunnel on the outside of the ribosome. Forms the main docking site for trigger factor binding to the ribosome. The polypeptide is Large ribosomal subunit protein uL23 (Ralstonia nicotianae (strain ATCC BAA-1114 / GMI1000) (Ralstonia solanacearum)).